The sequence spans 432 residues: Glutamyl-tRNA reductase (432 aa).

Residues 49-52, serine 109, 114-116, and glutamine 120 each bind substrate; these read TCNR and EGQ. The active-site Nucleophile is the cysteine 50. 198–203 provides a ligand contact to NADP(+); it reads GAGRMS.

Belongs to the glutamyl-tRNA reductase family. In terms of assembly, homodimer.

It carries out the reaction (S)-4-amino-5-oxopentanoate + tRNA(Glu) + NADP(+) = L-glutamyl-tRNA(Glu) + NADPH + H(+). The protein operates within porphyrin-containing compound metabolism; protoporphyrin-IX biosynthesis; 5-aminolevulinate from L-glutamyl-tRNA(Glu): step 1/2. It functions in the pathway porphyrin-containing compound metabolism; chlorophyll biosynthesis. In terms of biological role, catalyzes the NADPH-dependent reduction of glutamyl-tRNA(Glu) to glutamate 1-semialdehyde (GSA). The sequence is that of Glutamyl-tRNA reductase from Synechococcus sp. (strain CC9605).